The sequence spans 310 residues: Probable cell division protein WhiA (310 aa).

Positions 274-308 (SLKELGTLVPGGPISKSGINHRLRKINQFAEQLQK) form a DNA-binding region, H-T-H motif.

This sequence belongs to the WhiA family.

Functionally, involved in cell division and chromosome segregation. In Lactiplantibacillus plantarum (strain ATCC BAA-793 / NCIMB 8826 / WCFS1) (Lactobacillus plantarum), this protein is Probable cell division protein WhiA.